We begin with the raw amino-acid sequence, 172 residues long: Protein GrpE (172 aa).

The segment covering 1-11 (MSEENNSQNSN) has biased composition (low complexity). A disordered region spans residues 1–22 (MSEENNSQNSNPPNPENGEIAS).

The protein belongs to the GrpE family. In terms of assembly, homodimer.

It is found in the cytoplasm. Participates actively in the response to hyperosmotic and heat shock by preventing the aggregation of stress-denatured proteins, in association with DnaK and GrpE. It is the nucleotide exchange factor for DnaK and may function as a thermosensor. Unfolded proteins bind initially to DnaJ; upon interaction with the DnaJ-bound protein, DnaK hydrolyzes its bound ATP, resulting in the formation of a stable complex. GrpE releases ADP from DnaK; ATP binding to DnaK triggers the release of the substrate protein, thus completing the reaction cycle. Several rounds of ATP-dependent interactions between DnaJ, DnaK and GrpE are required for fully efficient folding. The chain is Protein GrpE from Bdellovibrio bacteriovorus (strain ATCC 15356 / DSM 50701 / NCIMB 9529 / HD100).